The primary structure comprises 1098 residues: Paired amphipathic helix protein Sin3b (1098 aa).

A compositionally biased stretch (gly residues) spans 1-25; it reads MAHAGSGGSAGRGFGGSRWGRSGSG. The segment at 1–26 is disordered; it reads MAHAGSGGSAGRGFGGSRWGRSGSGG. The interaction with CRY1 stretch occupies residues 1–299; sequence MAHAGSGGSA…VGKYGTLQEF (299 aa). PAH domains are found at residues 30–100 and 145–230; these read LPVH…LPLG and VPLE…LPEA. The interval 52 to 98 is interaction with REST; the sequence is PATYNGFLEIMKEFKSQSIDTPGVIRRVSQLFHEHPDLIVGFNAFLP. Over residues 238 to 247 the composition is skewed to polar residues; the sequence is NGSCEMNSGQ. The tract at residues 238–274 is disordered; sequence NGSCEMNSGQKNEEKSLEHNKKRSRPSLLRPVSAPAK. The tract at residues 275–499 is interaction with NCOR1; the sequence is KKMKLRGTKD…CLGGTSEVIQ (225 aa). Positions 283 to 360 constitute a PAH 3 domain; sequence KDLSIAAVGK…AQFKSFLGVK (78 aa). Residues 383 to 550 are interaction with SUDS3 and HDAC1; sequence ASCKRIGSSY…REAQQGFNKI (168 aa). The tract at residues 661 to 702 is disordered; the sequence is QQCPGTSDDSADERDRDRDSAEPERRRPTDEKPPADASPEPP. Residues Ser667 and Ser670 each carry the phosphoserine modification. Residues 673–694 are compositionally biased toward basic and acidic residues; it reads ERDRDRDSAEPERRRPTDEKPP.

In terms of assembly, component of the SIN3B complex, which includes SIN3B, HDAC2 or HDAC1, PHF12 and MORF4L1. Interacts with FOXK1/MNF, MXI, MAD, NCOR1 and SAP30. Interaction with SUDS3 enhances the interaction with HDAC1 to form a complex. Interacts with CRY1, HCFC1, MAD3, MAD4, MAEL, REST, RNF220 and SETDB1. Interacts with C6orf89. Interacts with MYT1L. Post-translationally, ubiquitinated by RNF220 that leads to proteasomal degradation.

It localises to the nucleus. Acts as a transcriptional repressor. Interacts with MXI1 to repress MYC responsive genes and antagonize MYC oncogenic activities. Interacts with MAD-MAX heterodimers by binding to MAD. The heterodimer then represses transcription by tethering SIN3B to DNA. Also forms a complex with FOXK1 which represses transcription. With FOXK1, regulates cell cycle progression probably by repressing cell cycle inhibitor genes expression. As part of the SIN3B complex represses transcription and counteracts the histone acetyltransferase activity of EP300 through the recognition H3K27ac marks by PHF12 and the activity of the histone deacetylase HDAC2. SIN3B complex is recruited downstream of the constitutively active genes transcriptional start sites through interaction with histones and mitigates histone acetylation and RNA polymerase II progression within transcribed regions contributing to the regulation of transcription. The sequence is that of Paired amphipathic helix protein Sin3b (Sin3b) from Mus musculus (Mouse).